Consider the following 492-residue polypeptide: Catalase isozyme 1 (492 aa).

Active-site residues include His65 and Asn138. Residue Tyr348 participates in heme binding.

This sequence belongs to the catalase family. As to quaternary structure, homotetramer. Requires heme as cofactor. High expression in seeds and early seedlings.

It is found in the glyoxysome. The catalysed reaction is 2 H2O2 = O2 + 2 H2O. Its function is as follows. Occurs in almost all aerobically respiring organisms and serves to protect cells from the toxic effects of hydrogen peroxide. The sequence is that of Catalase isozyme 1 (CAT1) from Cucurbita pepo (Vegetable marrow).